The sequence spans 367 residues: Glutamate 5-kinase (367 aa).

Residue lysine 9 coordinates ATP. Substrate is bound by residues serine 49, aspartate 136, and asparagine 148. Residues 168-169 and 210-216 each bind ATP; these read TD and TGGMKSK. A PUA domain is found at 276-350; it reads SGQIEVDAGA…GMQSQDIQAR (75 aa).

It belongs to the glutamate 5-kinase family.

The protein resides in the cytoplasm. The catalysed reaction is L-glutamate + ATP = L-glutamyl 5-phosphate + ADP. Its pathway is amino-acid biosynthesis; L-proline biosynthesis; L-glutamate 5-semialdehyde from L-glutamate: step 1/2. In terms of biological role, catalyzes the transfer of a phosphate group to glutamate to form L-glutamate 5-phosphate. This is Glutamate 5-kinase from Bacillus mycoides (strain KBAB4) (Bacillus weihenstephanensis).